The sequence spans 862 residues: Phosphofurin acidic cluster sorting protein 2 (862 aa).

3 disordered regions span residues 151 to 215 (HEDS…TTSM), 263 to 436 (LDVE…TRSQ), and 658 to 713 (SSAT…SQGV). Residues 263–272 (LDVENPSDSG) are compositionally biased toward low complexity. The span at 313-328 (SHREPPSPADVPEKTR) shows a compositional bias: basic and acidic residues. Positions 332–344 (GKQQLSDSVSDTV) are enriched in polar residues. Phosphoserine is present on residues Ser361, Ser387, Ser424, Ser662, and Ser665. Low complexity-rich tracts occupy residues 658-693 (SSATSGDSDDAAPSSSSILSSTPPSASTSPAAKEAS) and 700-710 (PSVSGGLSSPS).

It belongs to the PACS family. In terms of assembly, interacts with BID and PKD2. Interacts with SIRT1. Interacts with HDAC1. Interacts with TRPV1. Interacts with WDR37.

It localises to the endoplasmic reticulum. It is found in the mitochondrion. Functionally, multifunctional sorting protein that controls the endoplasmic reticulum (ER)-mitochondria communication, including the apposition of mitochondria with the ER and ER homeostasis. In addition, in response to apoptotic inducer, translocates BIB to mitochondria, which initiates a sequence of events including the formation of mitochondrial truncated BID, the release of cytochrome c, the activation of caspase-3 thereby causing cell death. May also involved in ion channel trafficking, directing acidic cluster-containing ion channels to distinct subcellular compartments. The polypeptide is Phosphofurin acidic cluster sorting protein 2 (Pacs2) (Mus musculus (Mouse)).